The chain runs to 354 residues: DNA integrity scanning protein DisA (354 aa).

Positions 6-144 (GIGIKNVLKI…GDIKYVLRES (139 aa)) constitute a DAC domain. Residues glycine 73, leucine 91, and 104 to 108 (TRHRT) contribute to the ATP site.

This sequence belongs to the DisA family. In terms of assembly, homooctamer. Requires Mg(2+) as cofactor.

The enzyme catalyses 2 ATP = 3',3'-c-di-AMP + 2 diphosphate. Its function is as follows. Participates in a DNA-damage check-point that is active prior to asymmetric division when DNA is damaged. DisA forms globular foci that rapidly scan along the chromosomes during sporulation, searching for lesions. When a lesion is present, DisA pauses at the lesion site. This triggers a cellular response that culminates in a temporary block in sporulation initiation. Functionally, also has diadenylate cyclase activity, catalyzing the condensation of 2 ATP molecules into cyclic di-AMP (c-di-AMP). c-di-AMP acts as a signaling molecule that couples DNA integrity with progression of sporulation. The rise in c-di-AMP level generated by DisA while scanning the chromosome, operates as a positive signal that advances sporulation; upon encountering a lesion, the DisA focus arrests at the damaged site and halts c-di-AMP synthesis. This Clostridium beijerinckii (strain ATCC 51743 / NCIMB 8052) (Clostridium acetobutylicum) protein is DNA integrity scanning protein DisA.